Here is a 789-residue protein sequence, read N- to C-terminus: Leucine-rich repeat and fibronectin type-III domain-containing protein 2 (789 aa).

Residues 1-20 form the signal peptide; sequence METLLGGLLAFGMAFAVVDA. The LRRNT domain maps to 21 to 52; the sequence is CPKYCVCQNLSESLGTLCPSKGLLFVPPDIDR. Residues 21 to 534 are Extracellular-facing; sequence CPKYCVCQNL…MHSQILGGTM (514 aa). The N-linked (GlcNAc...) asparagine glycan is linked to asparagine 29. LRR repeat units lie at residues 53–74, 77–98, 101–122, 125–146, 150–171, 174–195, and 198–219; these read RTVELRLGGNFIIHISRQDFAN, GLVDLTLSRNTISHIQPFSFLD, SLRSLHLDSNRLPSLGEDTLRG, NLQHLIVNNNQLGGIADEAFED, TLEDLDLSYNNLHGLPWDSVRR, NLHQLSLDHNLLDHIAEGTFAD, and KLARLDLTSNRLQKLPPDPIFA. One can recognise an LRRCT domain in the interval 242–288; it reads NPLHCNCELLWLRRLERDDDLETCGSPGGLKGRYFWHVREEEFVCEP. An Ig-like domain is found at 289–375; sequence PLITQHTHKL…GEATAMVEVS (87 aa). A disulfide bond links cysteine 310 and cysteine 359. N-linked (GlcNAc...) asparagine glycans are attached at residues asparagine 332, asparagine 341, and asparagine 384. Residues 383-424 form a disordered region; it reads SNSTSRTAPPKSRLSDITGSSKTSRGGGGSGGGEPPKSPPER. A compositionally biased stretch (gly residues) spans 407 to 416; sequence RGGGGSGGGE. The Fibronectin type-III domain occupies 421-518; it reads PPERAVLVSE…GCAQFFTKAD (98 aa). Residues 535–555 traverse the membrane as a helical segment; sequence ILVIGGIIVATLLVFIVILMV. The Cytoplasmic portion of the chain corresponds to 556 to 789; sequence RYKVCNHEAP…SSEWVMESTV (234 aa). Disordered stretches follow at residues 577–602, 619–654, and 668–702; these read SQTNGAQPPPPSSAPAGAPPQGPPKV, SDSSSSSSLGSGEAAGLGRAPWRIPPSAPRPKPSLD, and QRKEELLDSRTPAGRGAGTSARGHHSDREPLLGPP. The span at 583–599 shows a compositional bias: pro residues; sequence QPPPPSSAPAGAPPQGP. Residues 619 to 638 are compositionally biased toward low complexity; sequence SDSSSSSSLGSGEAAGLGRA. Over residues 641–650 the composition is skewed to pro residues; sequence RIPPSAPRPK. Residues 786–789 carry the PDZ-binding motif; sequence ESTV.

Belongs to the LRFN family. Forms heteromeric complexes with LRFN1, LRFN3, LRFN4 and LRFN5. Can form homomeric complexes, but not across cell junctions. Directly interacts with 2 NMDA receptor subunits GRIN1 and GRIN2A. Interacts with DLG1, DLG2, DLG3 and DLG4. In terms of processing, glycosylated.

It localises to the membrane. The protein resides in the synapse. It is found in the postsynaptic cell membrane. Functionally, promotes neurite outgrowth in hippocampal neurons. Enhances the cell surface expression of 2 NMDA receptor subunits GRIN1 and GRIN2A. May play a role in redistributing DLG4 to the cell periphery. The protein is Leucine-rich repeat and fibronectin type-III domain-containing protein 2 (LRFN2) of Homo sapiens (Human).